The primary structure comprises 89 residues: Small ribosomal subunit protein uS17 (89 aa).

Belongs to the universal ribosomal protein uS17 family. Part of the 30S ribosomal subunit.

One of the primary rRNA binding proteins, it binds specifically to the 5'-end of 16S ribosomal RNA. This Novosphingobium aromaticivorans (strain ATCC 700278 / DSM 12444 / CCUG 56034 / CIP 105152 / NBRC 16084 / F199) protein is Small ribosomal subunit protein uS17.